The following is a 444-amino-acid chain: E3 ubiquitin-protein ligase RNFT2 (444 aa).

The Extracellular segment spans residues Met-1 to His-181. Disordered stretches follow at residues Met-13–Asp-41 and Pro-92–Pro-149. Residues Tyr-107–His-121 are compositionally biased toward basic residues. Over residues Gly-131–Glu-140 the composition is skewed to basic and acidic residues. Residues Lys-182–Leu-202 traverse the membrane as a helical segment. At Arg-203 to Val-214 the chain is on the cytoplasmic side. The chain crosses the membrane as a helical span at residues Leu-215–Phe-235. At Ser-236–Asp-255 the chain is on the extracellular side. A helical membrane pass occupies residues Phe-256–Ala-276. The Cytoplasmic portion of the chain corresponds to Leu-277 to Ser-329. Residues Tyr-330–Gly-350 traverse the membrane as a helical segment. The Extracellular segment spans residues Arg-351–Tyr-444. The RING-type zinc finger occupies Cys-384–Arg-422.

The protein localises to the membrane. E3 ubiquitin-protein ligase that negatively regulates IL3-dependent cellular responses through IL3RA ubiquitination and degradation by the proteasome, having an anti-inflammatory effect. In Homo sapiens (Human), this protein is E3 ubiquitin-protein ligase RNFT2.